Consider the following 609-residue polypeptide: MFDAKKFLTDVSHEPGVYRMYDDKDQVIYVGKAKDLKKRLSSYFRKNLSSKKTEALVASIHHIDTTLTSSETEALLLEHNFIKLYQPRYNVLLRDDKSYPFILLTKERHQRITSYRGSKKFAGEYFGPYPHAGAVRETLSLLQKLFPVRQCENSVYSNRSRPCLQYQIGRCSAPCVQGYVSDEEYNQQVELARLFLQGKDQQVLDYLIGKMEQASRNLDFEQAARYRDQIQAVRSVIEKQFVSNERLDDMDIMSIAYQHGLACVQVMFIRQGKVLGNRSYFPKVPANTDLSELTETFVGQFYLQGHQGRSIPNSIIVDRQLAEKSELEQLLSEQAGRKVTIQESVKGDKSKYLQLAQVNAKAALNVQLKQSSRMSERYQALCDLLNLPKIKRMECFDISHTMGNQTVASCVVFNKEGPLKSDYRRFNIEGITGGDDYAAMEQVLQKRYERDLEEDKIPDIIFIDGGKGQLNRALNVFQHLQVKWDKNRPHLIGVAKGVDRRAGQEVLIISKQDREIHLPDDSLALHLIQHIRDESHNHAISGHRKKRQKAFTQSGLETIEGVGAKRRQALLKYLGGLQGVKKATLDEIASVPGISPKLAERIFETLKND.

Residues 13–91 (HEPGVYRMYD…IKLYQPRYNV (79 aa)) form the GIY-YIG domain. Residues 201–236 (QQVLDYLIGKMEQASRNLDFEQAARYRDQIQAVRSV) enclose the UVR domain.

It belongs to the UvrC family. As to quaternary structure, interacts with UvrB in an incision complex.

It localises to the cytoplasm. Functionally, the UvrABC repair system catalyzes the recognition and processing of DNA lesions. UvrC both incises the 5' and 3' sides of the lesion. The N-terminal half is responsible for the 3' incision and the C-terminal half is responsible for the 5' incision. The protein is UvrABC system protein C of Haemophilus influenzae (strain ATCC 51907 / DSM 11121 / KW20 / Rd).